Consider the following 500-residue polypeptide: FAD-linked oxidoreductase easE (500 aa).

The region spanning 37–220 (QGRIPLFTVG…TRATMRVFPD (184 aa)) is the FAD-binding PCMH-type domain.

It belongs to the oxygen-dependent FAD-linked oxidoreductase family. The cofactor is FAD.

The protein operates within alkaloid biosynthesis; ergot alkaloid biosynthesis. FAD-linked oxidoreductase; part of the gene cluster that mediates the biosynthesis of fungal ergot alkaloid. DmaW catalyzes the first step of ergot alkaloid biosynthesis by condensing dimethylallyl diphosphate (DMAP) and tryptophan to form 4-dimethylallyl-L-tryptophan. The second step is catalyzed by the methyltransferase easF that methylates 4-dimethylallyl-L-tryptophan in the presence of S-adenosyl-L-methionine, resulting in the formation of 4-dimethylallyl-L-abrine. The catalase easC and the FAD-dependent oxidoreductase easE then transform 4-dimethylallyl-L-abrine to chanoclavine-I which is further oxidized by easD in the presence of NAD(+), resulting in the formation of chanoclavine-I aldehyde. Chanoclavine-I aldehyde is the precursor of ergoamides and ergopeptines in Clavicipitaceae, and clavine-type alcaloids such as fumiclavine in Trichocomaceae. However, the metabolites downstream of chanoclavine-I aldehyde in Arthrodermataceae have not been identified yet. The sequence is that of FAD-linked oxidoreductase easE from Arthroderma benhamiae (strain ATCC MYA-4681 / CBS 112371) (Trichophyton mentagrophytes).